A 349-amino-acid polypeptide reads, in one-letter code: 5-deoxyribose 1-phosphate isomerase (349 aa).

Residues 49–51, Arg92, and Gln199 contribute to the substrate site; that span reads RGA. Catalysis depends on Asp240, which acts as the Proton donor. 250-251 provides a ligand contact to substrate; it reads NK.

It belongs to the EIF-2B alpha/beta/delta subunits family. DrdI subfamily.

It carries out the reaction 5-deoxy-alpha-D-ribose 1-phosphate = 5-deoxy-D-ribulose 1-phosphate. It participates in carbohydrate degradation. Functionally, catalyzes the isomerization of 5-deoxy-alpha-D-ribose 1-phosphate to 5-deoxy-D-ribulose 1-phosphate, as part of a 5-deoxyribose salvage pathway that recycles this toxic radical SAM enzyme by-product to mainstream metabolites. The sequence is that of 5-deoxyribose 1-phosphate isomerase from Clostridium botulinum (strain Langeland / NCTC 10281 / Type F).